The chain runs to 2556 residues: MAVANHEEAEATTVLLFGPQALSFTEESFQRIRVALNDTENAWMRQVVEELPECTSRVAKQFPKLQATPAAKLQNSLRDWLRIDEGVAPAASKSLPNALLTPLVVLDHLAQYSQYVQLAHVETGLGTDRYGPQSRPTRNLGFCTGLLSALAVSSASNKAEFRKYAAVAVRLAAVIGALVDAEDAIGHHGESKTFSAAYHSSKQESELQSILQDFPEDADSTGNLQAYISVNYDEGRATITTSNRTAQAFQQRLREAGITAQAIGLRGRFHYQGYQQDLARLVEICDATPELRLPDVTDAVIPIHSLSGGGLITEGRLHHIALREILVEQSQWGKTFDAMSRSSLANTQSLLVSFGFEKCVPPSAMPRVGGQVVYMTDQRDARLRLSAVKTPGEMVSEDEIAVIGMAIKVAGADDADEFWDLNLTAESQHREVPAERFTFETHWRTVDPARKWYGNFVRDHDAFDHKFFQKSPREATTQDPQQRIFLQSAYQAVEQSGYFNSLHADRNVGVSVITLDGMGMDTSLYPTLYQVDSGECTAALAGGTNIMTSPLWFQNLAGASFLSQTGPCKPFDAKADGYCRGEGVACVFLKKMTKAIEDGNTIIGSIRSTAVYQNDNCTPIFVPNAPSLSGLFDDVVRKSGLSPKDITLVEAHGTGTPVGDPAEWDSIRKTLGGRSVRSVPMPVGSVKGLIGHTECTSGVVALIKVLLLIHYGIIPPQASFQTLSPALKATADDMLEVCTKQTPWNVEYRAALINNYGASGSNASMIVTQPPKLRGNGPFSPPTDGGKYAFWLTGLDERSLRDYARRLSGFLASKKISSLSSLSFNAYRQSNRALPHGLIFSSSSMEELQTQLTDFAKGNGKLSATTRKPVRPVILCFGGQISRFVGLDKAVYESIGTLRTHLDRCDATLQSLGLDGLYPGIFERSQVDDPVKLQTMLFALQYSCAKCWLDCGLQPVAVVGHSFGELTALCIAGVLTLRDSLQVVAMRAQLIKSSWGPDPGAMMAVEGNLADVQTLLKNAERACPEETPATVACFNGPTTFTLAGSTKAIDAVSECISSVSVVRGKKLSVSNAFHSTLVEPLKDQLGQLAEGMIFGEAKIRWERATENQTSANIGPEFFASHMRDPVYANHALQRLHREFPSAIWLEAGSNSTITRMANKALGFPAESYFADINITSDSASNTLTESFVNLWKEGLAIPHWAHHCTQAPAYSTLLLPPYQFEKSRHWLELKKPQAVQLIELPSKAQQEELPTKLYTFVGYQDEGKRQARFRVNTMIKAYEEFVSGHLIVQTAAICPATLEVDITIEALFTLCPDFKATGLQPQVANVENLVPICVDPSRVLWLDLRATTSDFKSWEWQMVSTNEKGESKSTHVKGQIIFQSAAEAQAEFSRYERLVPHRRCTEILNDSDPDDVLQGRNMYKVFAEIVDYSEPYRGLRKLVGKGTTSAGRVVKQRSGETWLDTHISDCFSQVGGFWVNCMTDRSASDMYIAAGFESWIRRPGSTAAQDDPEKTSVWDVMACHVKASEKAYTTDIFIFDATSGLLSEIILGINYSRLPKSTMSKMLTKLTAPSERRAQVDSPSMPASINAPPSASEQAPVEPAPQTKESAPIAEPGAGGQSNSKVPGIVVEVLAELSGVEPDAIKMSTKLADIGIDSLVGMEMVHDLESKCECSLDMDEMAEVVTVNDVVQCVHKTLGIEGGSAAQESEGNLTPASSGTQSPRSDPVSDTSLSDLEQLPRKESDLELQLSASDVLGAFGETKKLTDQFITDFNCAGYMDNINPKQTQLCIALTIEAFEKLGCNLRTAKAGEALPRISHAPQHGRLTQYLYDMLEHEGRLIDIDGDRIVRTAVSVPHKSSKEILASLEAAYPEHVCANRLAFFCGTRLVEVLEGKLDGVKLIFGNEEGRQLVAGLYGDTQLNRIFYKQMEDILTRLISRIPRDSGPLRILEMGAGTGGTTKYLVPLLAKLGAPVEYTFTDLAPSFVAAARRQYKAYPFMKFHAHDIEQEPAQDLLGTQHIIIASNAVHATHSLTVSAKNMRKALRPDGFLMMLEMTQTVPWVDIIFGLLEGWWLFDDGRQHAISPESRWEKDLQSVGYGHIDWTDGHLAENKLQRIIIAMASGPQGGRLPLPAPPIAQSTSNITERATAVEGYVDRFTSGFAMQPLASAPGTTVRKDSAQCVLVTGATGSLGAHLVKELLGRSDVATVICLNRLSRGTNPEQRQYRSFEEKGLKLDSSQSAKLRIIETDTSKPLLGLSAEQYEEVAHMVTAIVHNAWPMSGARPLRGFEAQFSVMRNLIDLARDAAYVSQTITFQFISSIAVVGHYPLWSRERNVPEERVGIESILPNGYGDAKYVCERMLDATLHKYPDHFRAMGVRLGQVAGSSETGYWNSLEHLSFLVKSSQTLRALPDFQGELSWTPVDVVASTLADLVSYAAADFSAASTVYPIYHIDNPVRQPWKEMISVLARALDIPPANVLPFPEWVRRVRRFPGSTEKDNPAFKLIDFLDDNFVRMSCGGLLLDTRHTQQHSPTLAAQGPVSNQVAEGYIRYWKRTGFLAG.

Positions 16–270 are N-terminal acylcarrier protein transacylase domain (SAT); it reads LFGPQALSFT…QAIGLRGRFH (255 aa). Residue C143 is the Nucleophile; for transacylase activity of the active site. H270 (proton donor/acceptor; for transacylase activity) is an active-site residue. Residues 397 to 769 form the Ketosynthase family 3 (KS3) domain; it reads EDEIAVIGMA…GSNASMIVTQ (373 aa). A malonyl-CoA:ACP transacylase (MAT) domain region spans residues 876–1209; it reads CFGGQISRFV…WAHHCTQAPA (334 aa). Residues 1254 to 1383 form an N-terminal hotdog fold region; the sequence is YTFVGYQDEG…GQIIFQSAAE (130 aa). The PKS/mFAS DH domain maps to 1254 to 1560; it reads YTFVGYQDEG…YSRLPKSTMS (307 aa). The product template (PT) domain stretch occupies residues 1257–1564; it reads VGYQDEGKRQ…PKSTMSKMLT (308 aa). Residue H1285 is the Proton acceptor; for dehydratase activity of the active site. Residues 1408-1560 form a C-terminal hotdog fold region; it reads DPDDVLQGRN…YSRLPKSTMS (153 aa). D1465 acts as the Proton donor; for dehydratase activity in catalysis. The interval 1567–1621 is disordered; the sequence is TAPSERRAQVDSPSMPASINAPPSASEQAPVEPAPQTKESAPIAEPGAGGQSNSK. Residues 1577–1593 show a composition bias toward polar residues; sequence DSPSMPASINAPPSASE. The region spanning 1620-1694 is the Carrier domain; the sequence is SKVPGIVVEV…DVVQCVHKTL (75 aa). Residue S1654 is modified to O-(pantetheine 4'-phosphoryl)serine. The tract at residues 1700-1731 is disordered; it reads SAAQESEGNLTPASSGTQSPRSDPVSDTSLSD. A compositionally biased stretch (polar residues) spans 1702-1731; that stretch reads AQESEGNLTPASSGTQSPRSDPVSDTSLSD. Residues 1830 to 2107 form a methyltransferase domain region; that stretch reads LEHEGRLIDI…DWTDGHLAEN (278 aa). The NADPH-binding (R) domain stretch occupies residues 2180–2424; it reads VTGATGSLGA…WTPVDVVAST (245 aa).

Pantetheine 4'-phosphate is required as a cofactor.

The protein operates within secondary metabolite biosynthesis. Functionally, non-reducing polyketide synthase; part of the gene cluster that mediates the biosynthesis of azaterrilone A and other azaphilones, a class of fungal metabolites characterized by a highly oxygenated pyrano-quinone bicyclic core and exhibiting a broad range of bioactivities. The first step of the pathway begins with tazA that assembles one acetyl-CoA starter unit, five malonyl-CoA units, and catalyzes a series of Claisen condensations, methylation, PT-mediated cyclization, and finally releases the first hexaketide precursor through the R-domain. The tazA product then undergoes reduction on its terminal ketone and the following pyran-ring formation by yet undetermined enzyme(s). Dehydration and enoyl reduction, possibly involving the trans-enoyl reductase tazE leads to the next intermediate. TazD is predicted as an acetyltransferase and might catalyze the acetylation steps leading to the synthesis of azaterrilone A. Azaterrilone A is not the final product of the taz pathway and both the highly reducing polyketide synthase tazB and the dual enzyme tazHJ catalyze late steps of the pathway, leading to the production of the 2 final stereoisomers that contain additional polyketide modification whose structures have still to be determined. The chain is Non-reducing polyketide synthase tazA from Aspergillus terreus (strain NIH 2624 / FGSC A1156).